The sequence spans 101 residues: Replication restart protein PriB (101 aa).

Residues Met1–Thr101 form the SSB domain.

This sequence belongs to the PriB family. Homodimer. Interacts with PriA and DnaT. Component of the replication restart primosome. Primosome assembly occurs via a 'hand-off' mechanism. PriA binds to replication forks, subsequently PriB then DnaT bind; DnaT then displaces ssDNA to generate the helicase loading substrate.

Involved in the restart of stalled replication forks, which reloads the replicative helicase on sites other than the origin of replication; the PriA-PriB pathway is the major replication restart pathway. During primosome assembly it facilitates complex formation between PriA and DnaT on DNA; stabilizes PriA on DNA. Stimulates the DNA unwinding activity of PriA helicase. The chain is Replication restart protein PriB from Shewanella woodyi (strain ATCC 51908 / MS32).